We begin with the raw amino-acid sequence, 381 residues long: MSSNIKLAQKDYKGDKEFAAALHGKEGHKKHGLGAVMSKNKDAQAAAVEGFFRNWGDKDRSKIEDADEQGRIEDYAGLTKHYYNLVTDFYEYGWGSSFHFSRYYKGEAFRQATARHEHYLAYKMGIQPGMKVLDVGCGVGGPAREIARFTGANIVGLNNNDYQVERGTHYSEVQGFGDQVTYVKGDFMQMDFPDNSFDAVYAIEATVHAPVLEGVYSEIFRVLKPGGVFGVYEWVMTDEYDESNPEHRDICYGIEKGDGIPKMYKREVAVKALENVGFDIEYQEDLAADDAEVPWYYPLAGEWKYVQSLNDIVTIGRTSRLGRMVTMNVIGALEKIGLAPQGSRQVTEALEDAAVNLVAGGKKKLFTPMMLFVSRKPEDKN.

Belongs to the class I-like SAM-binding methyltransferase superfamily. Erg6/SMT family.

The catalysed reaction is zymosterol + S-adenosyl-L-methionine = fecosterol + S-adenosyl-L-homocysteine + H(+). It participates in steroid metabolism; ergosterol biosynthesis; ergosterol from zymosterol: step 1/5. Catalyzes the methyl transfer from S-adenosyl-methionine to the C-24 of zymosterol to form fecosterol. This is Sterol 24-C-methyltransferase (ERG6) from Yarrowia lipolytica (strain CLIB 122 / E 150) (Yeast).